The following is a 614-amino-acid chain: uncharacterized protein (614 aa).

This is an uncharacterized protein from Lactococcus lactis subsp. cremoris (strain MG1363).